The chain runs to 425 residues: UPF0761 membrane protein PXO_04555 (425 aa).

A run of 6 helical transmembrane segments spans residues 48 to 68, 105 to 125, 154 to 174, 182 to 202, 219 to 239, and 250 to 270; these read VFAL…FPAF, FTVA…HSIE, GTML…LPLF, LAEF…IVLI, GALL…VYLG, and ALSA…SVLL.

Belongs to the UPF0761 family.

It is found in the cell inner membrane. The polypeptide is UPF0761 membrane protein PXO_04555 (Xanthomonas oryzae pv. oryzae (strain PXO99A)).